We begin with the raw amino-acid sequence, 188 residues long: UPF0461 protein C5orf24 homolog (188 aa).

A Phosphoserine modification is found at serine 37. Residue lysine 75 forms a Glycyl lysine isopeptide (Lys-Gly) (interchain with G-Cter in SUMO2) linkage. The span at 80–92 (KKKNLNRSGKRGR) shows a compositional bias: basic residues. Residues 80–141 (KKKNLNRSGK…AGYKVSPGRP (62 aa)) form a disordered region. A compositionally biased stretch (polar residues) spans 94 to 107 (SGTTKSAGYRTSTG). Phosphoserine occurs at positions 121 and 180. Lysine 184 is covalently cross-linked (Glycyl lysine isopeptide (Lys-Gly) (interchain with G-Cter in SUMO2)).

Belongs to the UPF0461 family.

The protein is UPF0461 protein C5orf24 homolog of Mus musculus (Mouse).